The following is a 121-amino-acid chain: UPF0102 protein DehaBAV1_0707 (121 aa).

Belongs to the UPF0102 family.

In Dehalococcoides mccartyi (strain ATCC BAA-2100 / JCM 16839 / KCTC 5957 / BAV1), this protein is UPF0102 protein DehaBAV1_0707.